Consider the following 150-residue polypeptide: Phosphopantetheine adenylyltransferase (150 aa).

Residue serine 10 participates in substrate binding. Residues 10 to 11 and histidine 18 each bind ATP; that span reads SF. Substrate is bound by residues lysine 42, threonine 74, and arginine 88. Residues 89 to 91, glutamate 99, and 124 to 130 each bind ATP; these read GLR and LAYISSS.

The protein belongs to the bacterial CoaD family. In terms of assembly, homohexamer. It depends on Mg(2+) as a cofactor.

The protein localises to the cytoplasm. It catalyses the reaction (R)-4'-phosphopantetheine + ATP + H(+) = 3'-dephospho-CoA + diphosphate. Its pathway is cofactor biosynthesis; coenzyme A biosynthesis; CoA from (R)-pantothenate: step 4/5. Functionally, reversibly transfers an adenylyl group from ATP to 4'-phosphopantetheine, yielding dephospho-CoA (dPCoA) and pyrophosphate. This is Phosphopantetheine adenylyltransferase from Cytophaga hutchinsonii (strain ATCC 33406 / DSM 1761 / CIP 103989 / NBRC 15051 / NCIMB 9469 / D465).